The sequence spans 327 residues: Vacuolar protein sorting-associated protein 26A (327 aa).

Residues 305–327 (RNFHQRYESPEPRPSLSAEQPEM) form a disordered region.

It belongs to the VPS26 family. As to quaternary structure, component of the heterotrimeric retromer cargo-selective complex (CSC) which is believed to associate with variable sorting nexins to form functionally distinct retromer complex variants.

Its subcellular location is the cytoplasm. It localises to the endosome membrane. It is found in the early endosome. Functionally, acts as a component of the retromer cargo-selective complex (CSC). The CSC is believed to be the core functional component of retromer or respective retromer complex variants acting to prevent missorting of selected transmembrane cargo proteins into the lysosomal degradation pathway. Retromer mediates retrograde transport of cargo proteins from endosomes to the trans-Golgi network (TGN). The chain is Vacuolar protein sorting-associated protein 26A (vps26a) from Danio rerio (Zebrafish).